The chain runs to 536 residues: Pre-mRNA-splicing regulator female-lethal(2)D (536 aa).

The segment at 1 to 91 (MSVAAMTMDD…LQQQQQQQQQ (91 aa)) is disordered. Low complexity predominate over residues 28-39 (QNLNILNSSQNS). A compositionally biased stretch (basic residues) spans 57 to 69 (HHHHHPHPHHHHH). Low complexity predominate over residues 72 to 91 (QQQQQQQQQHLQQQQQQQQQ). Residues 254-319 (KSFSEEVKKS…KQAIKDEVVA (66 aa)) adopt a coiled-coil conformation. Residues 424 to 450 (APRTLPPKKSKLRGITTRRNSQLEEDH) form a disordered region.

Belongs to the fl(2)d family. As to quaternary structure, component of the WMM complex, a N6-methyltransferase complex composed of a catalytic subcomplex, named MAC, and of an associated subcomplex, named MACOM. The MAC subcomplex is composed of Ime4/Mettl3 and Mettl14. The MACOM subcomplex is composed of fl(2)d, Flacc/Xio, Hakai, vir, and, in some cases of nito. Interacts with vir and msk. Part of a complex containing fl(2)d, Sxl and vir.

The protein localises to the nucleus. Associated component of the WMM complex, a complex that mediates N6-methyladenosine (m6A) methylation of mRNAs, a modification that plays a role in the efficiency of mRNA splicing and is required for sex determination. Required for sex determination and dosage compensation via Sxl alternative splicing: m6A methylation acts as a key regulator of Sxl pre-mRNA and promotes female-specific alternative splicing of Sxl, which determines female physiognomy. M6A methylation is also required for neuronal functions. Required for proper inclusion of regulated exons in Ubx transcripts, leading to isoforms Ia/b and IIa/b. The protein is Pre-mRNA-splicing regulator female-lethal(2)D of Drosophila melanogaster (Fruit fly).